We begin with the raw amino-acid sequence, 62 residues long: Teretoxin Tan1.1 (62 aa).

An N-terminal signal peptide occupies residues Met-1–Phe-21. A propeptide spanning residues Pro-22–Arg-38 is cleaved from the precursor.

It belongs to the teretoxin A (TA) superfamily. Contains 2 disulfide bonds. Expressed by the venom duct.

It is found in the secreted. This chain is Teretoxin Tan1.1, found in Terebra anilis (Auger snail).